The chain runs to 76 residues: UPF0729 protein C18orf32 homolog (76 aa).

The interval 1 to 37 (MVCIPCIVIPVLLWVYKKFLEPYIYPLISPFVSRMWP) is necessary for its localzation to the endoplasmic reticulum and lipid droplets. Positions 47–56 (KNKGKVDYKG) are enriched in basic and acidic residues. Positions 47-76 (KNKGKVDYKGADINGLPTRGPTEMCDKKKD) are disordered.

Belongs to the UPF0729 family. In terms of assembly, interacts with DERL1 and AMFR. In terms of processing, undergoes ER-associated degradation (ERAD).

It is found in the endoplasmic reticulum. Its subcellular location is the lipid droplet. Its function is as follows. May activate the NF-kappa-B signaling pathway. In Bos taurus (Bovine), this protein is UPF0729 protein C18orf32 homolog.